The primary structure comprises 216 residues: Dimethylamine corrinoid protein 2 (216 aa).

Residues 1-91 (MASKEELLQE…EMPAGTETKK (91 aa)) enclose the B12-binding N-terminal domain. Residues 92–216 (LGVIVNGTVE…AKAKELLLGK (125 aa)) form the B12-binding domain. Methylcob(III)alamin is bound at residue histidine 105.

This sequence belongs to the methylamine corrinoid protein family.

It functions in the pathway one-carbon metabolism; methanogenesis from dimethylamine. Functionally, acts as a methyl group carrier between MtbB and MtbA. The polypeptide is Dimethylamine corrinoid protein 2 (mtbC2) (Methanosarcina acetivorans (strain ATCC 35395 / DSM 2834 / JCM 12185 / C2A)).